A 970-amino-acid chain; its full sequence is Phosphoenolpyruvate carboxylase 1 (970 aa).

Residue S15 is modified to Phosphoserine. Active-site residues include H177, K606, and R647.

It belongs to the PEPCase type 1 family. In terms of assembly, homotetramer. The cofactor is Mg(2+).

It localises to the cytoplasm. It catalyses the reaction oxaloacetate + phosphate = phosphoenolpyruvate + hydrogencarbonate. It functions in the pathway photosynthesis; C4 acid pathway. With respect to regulation, by light-reversible phosphorylation. Functionally, through the carboxylation of phosphoenolpyruvate (PEP) it forms oxaloacetate, a four-carbon dicarboxylic acid source for the tricarboxylic acid cycle. The chain is Phosphoenolpyruvate carboxylase 1 (PEP1) from Zea mays (Maize).